A 450-amino-acid polypeptide reads, in one-letter code: Protein indeterminate-domain 13 (450 aa).

A Phosphoserine modification is found at S54. C2H2-type zinc fingers lie at residues 64 to 86 (FFCEICNKGFQREQNLQLHKRGH) and 106 to 136 (YICPEKSCVHHDPARALGDLTGIKKHFSRKH). The short motif at 128 to 135 (IKKHFSRK) is the Nuclear localization signal element. The segment at 141–165 (WKCDKCSKKYAVISDWKAHNKICGS) adopts a C2H2-type 2; degenerate zinc-finger fold. Zn(2+) is bound by residues C143, C146, H159, C163, C170, C172, H185, and C189. A CCHC-type 2; atypical zinc finger spans residues 168–191 (FRCDCGTLFSRKDSFISHRSFCDV). The SHR-binding stretch occupies residues 178–190 (RKDSFISHRSFCD). Over residues 248 to 263 (FGQKFTNSNPTQQQPN) the composition is skewed to polar residues. Residues 248 to 280 (FGQKFTNSNPTQQQPNALALSSPPSPRSTSDSV) form a disordered region.

It is found in the nucleus. Probable transcription factor. This Arabidopsis thaliana (Mouse-ear cress) protein is Protein indeterminate-domain 13.